The chain runs to 100 residues: Nucleoid-associated protein RoseRS_1534 (100 aa).

Belongs to the YbaB/EbfC family. As to quaternary structure, homodimer.

The protein localises to the cytoplasm. It is found in the nucleoid. In terms of biological role, binds to DNA and alters its conformation. May be involved in regulation of gene expression, nucleoid organization and DNA protection. In Roseiflexus sp. (strain RS-1), this protein is Nucleoid-associated protein RoseRS_1534.